A 196-amino-acid polypeptide reads, in one-letter code: Small ribosomal subunit protein uS4c (196 aa).

The disordered stretch occupies residues 16-40 (GALPGLTRKTPKSGSNLKKKFHSGK). The S4 RNA-binding domain occupies 89-152 (MRLDNTLFRL…RSKDLVRNSI (64 aa)).

Belongs to the universal ribosomal protein uS4 family. Part of the 30S ribosomal subunit. Contacts protein S5. The interaction surface between S4 and S5 is involved in control of translational fidelity.

The protein localises to the plastid. Its subcellular location is the chloroplast. In terms of biological role, one of the primary rRNA binding proteins, it binds directly to 16S rRNA where it nucleates assembly of the body of the 30S subunit. Functionally, with S5 and S12 plays an important role in translational accuracy. This Anthoxanthum odoratum (Sweet vernal grass) protein is Small ribosomal subunit protein uS4c (rps4).